A 153-amino-acid polypeptide reads, in one-letter code: UPF0260 protein YcgN (153 aa).

The protein belongs to the UPF0260 family.

The chain is UPF0260 protein YcgN from Escherichia coli O6:K15:H31 (strain 536 / UPEC).